Reading from the N-terminus, the 369-residue chain is 3,4-dihydroxy-2-butanone 4-phosphate synthase (369 aa).

The DHBP synthase stretch occupies residues 1–201; it reads MAFDRIEDII…IADLIHYRLS (201 aa). D-ribulose 5-phosphate is bound by residues 27 to 28, D32, 140 to 144, and E164; these read RE and RAGHT. E28 contacts Mg(2+). Residue H143 participates in Mg(2+) binding. The GTP cyclohydrolase II-like stretch occupies residues 202 to 369; sequence TEHTIVRIGE…EVIESIPFPG (168 aa).

The protein in the N-terminal section; belongs to the DHBP synthase family. This sequence in the C-terminal section; belongs to the GTP cyclohydrolase II family. It depends on Mg(2+) as a cofactor. Mn(2+) serves as cofactor.

The enzyme catalyses D-ribulose 5-phosphate = (2S)-2-hydroxy-3-oxobutyl phosphate + formate + H(+). Its pathway is cofactor biosynthesis; riboflavin biosynthesis; 2-hydroxy-3-oxobutyl phosphate from D-ribulose 5-phosphate: step 1/1. Catalyzes the conversion of D-ribulose 5-phosphate to formate and 3,4-dihydroxy-2-butanone 4-phosphate. The protein is 3,4-dihydroxy-2-butanone 4-phosphate synthase (ribB) of Pseudomonas syringae pv. tomato (strain ATCC BAA-871 / DC3000).